The chain runs to 388 residues: N5-carboxyaminoimidazole ribonucleotide synthase (388 aa).

ATP is bound by residues K105, K140, 174-177 (ESFV), E182, and 267-268 (NE). One can recognise an ATP-grasp domain in the interval 109-297 (RHFLQNLGLP…QFALQLQAVT (189 aa)).

Belongs to the PurK/PurT family. As to quaternary structure, homodimer.

The catalysed reaction is 5-amino-1-(5-phospho-beta-D-ribosyl)imidazole + hydrogencarbonate + ATP = 5-carboxyamino-1-(5-phospho-D-ribosyl)imidazole + ADP + phosphate + 2 H(+). Its pathway is purine metabolism; IMP biosynthesis via de novo pathway; 5-amino-1-(5-phospho-D-ribosyl)imidazole-4-carboxylate from 5-amino-1-(5-phospho-D-ribosyl)imidazole (N5-CAIR route): step 1/2. In terms of biological role, catalyzes the ATP-dependent conversion of 5-aminoimidazole ribonucleotide (AIR) and HCO(3)(-) to N5-carboxyaminoimidazole ribonucleotide (N5-CAIR). This is N5-carboxyaminoimidazole ribonucleotide synthase from Synechocystis sp. (strain ATCC 27184 / PCC 6803 / Kazusa).